The sequence spans 430 residues: uncharacterized protein (430 aa).

Residues 207–223 (GETYMFGSANGLQLSIY) form a helical membrane-spanning segment.

It is found in the host membrane. Its function is as follows. May play a role in phage assembly. This is an uncharacterized protein from Pseudomonas phage Pf1 (Bacteriophage Pf1).